Consider the following 211-residue polypeptide: Uridine kinase (211 aa).

Residue 12–19 participates in ATP binding; it reads GGSGSGKT.

This sequence belongs to the uridine kinase family.

The protein localises to the cytoplasm. The enzyme catalyses uridine + ATP = UMP + ADP + H(+). The catalysed reaction is cytidine + ATP = CMP + ADP + H(+). The protein operates within pyrimidine metabolism; CTP biosynthesis via salvage pathway; CTP from cytidine: step 1/3. It functions in the pathway pyrimidine metabolism; UMP biosynthesis via salvage pathway; UMP from uridine: step 1/1. The chain is Uridine kinase from Geobacillus kaustophilus (strain HTA426).